A 184-amino-acid polypeptide reads, in one-letter code: Large ribosomal subunit protein uL6 (184 aa).

This sequence belongs to the universal ribosomal protein uL6 family. In terms of assembly, part of the 50S ribosomal subunit.

Functionally, this protein binds to the 23S rRNA, and is important in its secondary structure. It is located near the subunit interface in the base of the L7/L12 stalk, and near the tRNA binding site of the peptidyltransferase center. This is Large ribosomal subunit protein uL6 from Pseudothermotoga lettingae (strain ATCC BAA-301 / DSM 14385 / NBRC 107922 / TMO) (Thermotoga lettingae).